The following is a 605-amino-acid chain: Granule-bound starch synthase 1, chloroplastic/amyloplastic (605 aa).

The transit peptide at 1-72 (MAALATSQLV…GGRFPSLVVC (72 aa)) directs the protein to the chloroplast. Lysine 91 contacts ADP-alpha-D-glucose.

This sequence belongs to the glycosyltransferase 1 family. Bacterial/plant glycogen synthase subfamily.

Its subcellular location is the plastid. It localises to the chloroplast. The protein localises to the amyloplast. The catalysed reaction is an NDP-alpha-D-glucose + [(1-&gt;4)-alpha-D-glucosyl](n) = [(1-&gt;4)-alpha-D-glucosyl](n+1) + a ribonucleoside 5'-diphosphate + H(+). It participates in glycan biosynthesis; starch biosynthesis. Functionally, required for the synthesis of amylose in endosperm. The polypeptide is Granule-bound starch synthase 1, chloroplastic/amyloplastic (WAXY) (Zea mays (Maize)).